A 486-amino-acid polypeptide reads, in one-letter code: E3 ubiquitin-protein ligase RNF8 (486 aa).

An FHA domain is found at 38 to 92 (VTVGRGFGVTYQLVSKICPLMISRNHCVLKQNPEGQWTIMDNKSLNGVWLNRARL). A required for interaction with PIWIL1 region spans residues 68-72 (QNPEG). The residue at position 157 (Ser-157) is a Phosphoserine. The segment covering 180–201 (SCESGQSVKSQGKGEVSSTPSE) has biased composition (polar residues). Residues 180–207 (SCESGQSVKSQGKGEVSSTPSENLDPKL) are disordered. The segment at 404–442 (CIICSEYFIEAVTLNCAHSFCSYCINEWMKRKIECPICR) adopts an RING-type zinc-finger fold.

This sequence belongs to the RNF8 family. As to quaternary structure, homodimer. Forms a E2-E3 ubiquitin ligase complex composed of the RNF8 homodimer and a E2 heterodimer of UBE2N and UBE2V2. Interacts with class III E2s, including UBE2E1, UBE2E2, and UBE2E3 and with UBE2N. Interacts with RXRA. Interacts (via FHA domain) with phosphorylated HERC2 (via C-terminus). Interacts with PIWIL1; leading to sequester RNF8 in the cytoplasm. Interacts with WRAP53/TCAB1. Post-translationally, autoubiquitinated through 'Lys-48' and 'Lys-63' of ubiquitin. 'Lys-63' polyubiquitination is mediated by UBE2N. 'Lys-29'-type polyubiquitination is also observed, but it doesn't require its own functional RING-type zinc finger.

Its subcellular location is the nucleus. It is found in the cytoplasm. It localises to the midbody. The protein resides in the chromosome. The protein localises to the telomere. The catalysed reaction is S-ubiquitinyl-[E2 ubiquitin-conjugating enzyme]-L-cysteine + [acceptor protein]-L-lysine = [E2 ubiquitin-conjugating enzyme]-L-cysteine + N(6)-ubiquitinyl-[acceptor protein]-L-lysine.. It functions in the pathway protein modification; protein ubiquitination. Functionally, E3 ubiquitin-protein ligase that plays a key role in DNA damage signaling via 2 distinct roles: by mediating the 'Lys-63'-linked ubiquitination of histones H2A and H2AX and promoting the recruitment of DNA repair proteins at double-strand breaks (DSBs) sites, and by catalyzing 'Lys-48'-linked ubiquitination to remove target proteins from DNA damage sites. Following DNA DSBs, it is recruited to the sites of damage by ATM-phosphorylated MDC1 and catalyzes the 'Lys-63'-linked ubiquitination of histones H2A and H2AX, thereby promoting the formation of TP53BP1 and BRCA1 ionizing radiation-induced foci (IRIF). Also controls the recruitment of UIMC1-BRCC3 (RAP80-BRCC36) and PAXIP1/PTIP to DNA damage sites. Promotes the recruitment of NBN to DNA damage sites by catalyzing 'Lys-6'-linked ubiquitination of NBN. Also recruited at DNA interstrand cross-links (ICLs) sites and catalyzes 'Lys-63'-linked ubiquitination of histones H2A and H2AX, leading to recruitment of FAAP20 and Fanconi anemia (FA) complex, followed by interstrand cross-link repair. H2A ubiquitination also mediates the ATM-dependent transcriptional silencing at regions flanking DSBs in cis, a mechanism to avoid collision between transcription and repair intermediates. Promotes the formation of 'Lys-63'-linked polyubiquitin chains via interactions with the specific ubiquitin-conjugating UBE2N/UBC13 and ubiquitinates non-histone substrates such as PCNA. Substrates that are polyubiquitinated at 'Lys-63' are usually not targeted for degradation. Also catalyzes the formation of 'Lys-48'-linked polyubiquitin chains via interaction with the ubiquitin-conjugating UBE2L6/UBCH8, leading to degradation of substrate proteins such as CHEK2, JMJD2A/KDM4A and KU80/XRCC5: it is still unclear how the preference toward 'Lys-48'- versus 'Lys-63'-linked ubiquitination is regulated but it could be due to RNF8 ability to interact with specific E2 specific ligases. For instance, interaction with phosphorylated HERC2 promotes the association between RNF8 and UBE2N/UBC13 and favors the specific formation of 'Lys-63'-linked ubiquitin chains. Promotes non-homologous end joining (NHEJ) by promoting the 'Lys-48'-linked ubiquitination and degradation the of KU80/XRCC5. Following DNA damage, mediates the ubiquitination and degradation of JMJD2A/KDM4A in collaboration with RNF168, leading to unmask H4K20me2 mark and promote the recruitment of TP53BP1 at DNA damage sites. Following DNA damage, mediates the ubiquitination and degradation of POLD4/p12, a subunit of DNA polymerase delta. In the absence of POLD4, DNA polymerase delta complex exhibits higher proofreading activity. In addition to its function in damage signaling, also plays a role in higher-order chromatin structure by mediating extensive chromatin decondensation. Involved in the activation of ATM by promoting histone H2B ubiquitination, which indirectly triggers histone H4 'Lys-16' acetylation (H4K16ac), establishing a chromatin environment that promotes efficient activation of ATM kinase. Required in the testis, where it plays a role in the replacement of histones during spermatogenesis. At uncapped telomeres, promotes the joining of deprotected chromosome ends by inducing H2A ubiquitination and TP53BP1 recruitment, suggesting that it may enhance cancer development by aggravating telomere-induced genome instability in case of telomeric crisis. Promotes the assembly of RAD51 at DNA DSBs in the absence of BRCA1 and TP53BP1 Also involved in class switch recombination in immune system, via its role in regulation of DSBs repair. May be required for proper exit from mitosis after spindle checkpoint activation and may regulate cytokinesis. May play a role in the regulation of RXRA-mediated transcriptional activity. Not involved in RXRA ubiquitination by UBE2E2. This chain is E3 ubiquitin-protein ligase RNF8, found in Pongo abelii (Sumatran orangutan).